Reading from the N-terminus, the 1226-residue chain is Polyamine-transporting ATPase 13A3 (1226 aa).

Over 1–28 (MDREERKTINQGQEDEMEIYGYNLSRWK) the chain is Cytoplasmic. The stretch at 29-49 (LAIVSLGVICSGGFLLLLLYW) is an intramembrane region. Residues 50-205 (MPEWRVKATC…IAVKVPSVFK (156 aa)) are Cytoplasmic-facing. Position 98 is a phosphoserine (Ser98). The chain crosses the membrane as a helical span at residues 206–226 (LLIKEVLNPFYIFQLFSVILW). The Lumenal portion of the chain corresponds to 227 to 232 (STDEYY). The chain crosses the membrane as a helical span at residues 233-253 (YYALAIVVMSIVSIVSSLYSI). Residues 254–409 (RKQYVMLHDM…KPTDFKLYRD (156 aa)) lie on the Cytoplasmic side of the membrane. The helical transmembrane segment at 410–430 (AYLFLLCLVAVAGIGFIYTII) threads the bilayer. Topologically, residues 431 to 448 (NSILNEVQVGVIIIESLD) are lumenal. The helical transmembrane segment at 449–469 (IITITVPPALPAAMTAGIVYA) threads the bilayer. The Cytoplasmic portion of the chain corresponds to 470-940 (QRRLKKIGIF…ALITSFCVFK (471 aa)). The active-site 4-aspartylphosphate intermediate is Asp498. Residues Asp498 and Thr500 each contribute to the Mg(2+) site. ATP contacts are provided by residues 498–500 (DKT), Phe628, Arg684, and Asp750. Position 817 is a phosphoserine (Ser817). Asp883 and Asp887 together coordinate Mg(2+). 883–887 (DGAND) is an ATP binding site. A helical transmembrane segment spans residues 941–961 (FMALYSIIQYFSVTLLYSILS). Asn962 is a topological domain (lumenal). Residues 963-983 (LGDFQFLFIDLAIILVVVFTM) traverse the membrane as a helical segment. Residues 984 to 999 (SLNPAWKELVAQRPPS) are Cytoplasmic-facing. A helical membrane pass occupies residues 1000–1020 (GLISGALLFSVLSQIIICIGF). The Lumenal portion of the chain corresponds to 1021 to 1073 (QSLGFFWVKQQPWYEVWHPKSDACNTTGSGFWNSSHVDNETELDEHNIQNYEN). Residues 1074–1094 (TTVFFISSFQYLIVAIAFSKG) form a helical membrane-spanning segment. At 1095–1105 (KPFRQPCYKNY) the chain is on the cytoplasmic side. Residues 1106–1126 (FFVFSVIFLYIFILFIMLYPV) form a helical membrane-spanning segment. Topologically, residues 1127-1143 (ASVDQVLQIVCVPYQWR) are lumenal. A helical membrane pass occupies residues 1144-1164 (VTMLIIVLVNAFVSITVEESV). The Cytoplasmic segment spans residues 1165–1226 (DRWGKCCLPW…NGSCQIITIT (62 aa)).

This sequence belongs to the cation transport ATPase (P-type) (TC 3.A.3) family. Type V subfamily. As to expression, broadly expressed.

It localises to the recycling endosome membrane. Its subcellular location is the early endosome membrane. It is found in the late endosome membrane. The enzyme catalyses putrescine(out) + ATP + H2O = putrescine(in) + ADP + phosphate + H(+). ATP-driven pump involved in endocytosis-dependent polyamine transport. Uses ATP as an energy source to transfer polyamine precursor putrescine from the endosomal compartment to the cytosol. This chain is Polyamine-transporting ATPase 13A3, found in Homo sapiens (Human).